We begin with the raw amino-acid sequence, 363 residues long: Heat-inducible transcription repressor HrcA (363 aa).

Belongs to the HrcA family.

Its function is as follows. Negative regulator of class I heat shock genes (grpE-dnaK-dnaJ and groELS operons). Prevents heat-shock induction of these operons. This is Heat-inducible transcription repressor HrcA from Afipia carboxidovorans (strain ATCC 49405 / DSM 1227 / KCTC 32145 / OM5) (Oligotropha carboxidovorans).